The chain runs to 295 residues: Small ribosomal subunit protein uS2 (295 aa).

The residue at position 2 (Ser-2) is an N-acetylserine. Phosphoserine is present on Ser-43. Lys-52 bears the N6-acetyllysine mark. The interaction with PPP1R16B stretch occupies residues 54 to 113 (TWEKLLLAARAIVAIENPADVSVISSRNTGQRAVLKFAAATGATPIAGRFTPGTFTNQIQ). At Lys-89 the chain carries N6-acetyllysine; alternate. Lys-89 is covalently cross-linked (Glycyl lysine isopeptide (Lys-Gly) (interchain with G-Cter in SUMO2); alternate). Thr-97 carries the post-translational modification Phosphothreonine. Laminin-binding stretches follow at residues 161–180 (IPCN…MLAR) and 205–229 (RDPE…EFQG). 5 [DE]-W-[ST] repeats span residues 230-232 (EWT), 247-249 (DWS), 266-268 (DWS), 275-277 (DWS), and 293-295 (EWS). A laminin-binding region spans residues 242–295 (QPEVADWSEGVQVPSVPIQQFPTEDWSAQPATEDWSAAPTAQATEWVGTTTEWS). Positions 266–295 (DWSAQPATEDWSAAPTAQATEWVGTTTEWS) are disordered. Residues 280–295 (PTAQATEWVGTTTEWS) are compositionally biased toward polar residues.

This sequence belongs to the universal ribosomal protein uS2 family. In terms of assembly, monomer (37LRP) and homodimer (67LR). Component of the small ribosomal subunit. Mature ribosomes consist of a small (40S) and a large (60S) subunit. The 40S subunit contains about 33 different proteins and 1 molecule of RNA (18S). The 60S subunit contains about 49 different proteins and 3 molecules of RNA (28S, 5.8S and 5S). Interacts with RPS21. Interacts with several laminins including at least LAMB1. Interacts with MDK. The mature dimeric form interacts with PPP1R16B (via its fourth ankyrin repeat). Interacts with PPP1CA only in the presence of PPP1R16B. Post-translationally, acylated. Acylation may be a prerequisite for conversion of the monomeric 37 kDa laminin receptor precursor (37LRP) to the mature dimeric 67 kDa laminin receptor (67LR), and may provide a mechanism for membrane association. Cleaved by stromelysin-3 (ST3) at the cell surface. Cleavage by stromelysin-3 may be a mechanism to alter cell-extracellular matrix interactions.

It localises to the cell membrane. It is found in the cytoplasm. Its subcellular location is the nucleus. Functionally, required for the assembly and/or stability of the 40S ribosomal subunit. Required for the processing of the 20S rRNA-precursor to mature 18S rRNA in a late step of the maturation of 40S ribosomal subunits. Also functions as a cell surface receptor for laminin. Plays a role in cell adhesion to the basement membrane and in the consequent activation of signaling transduction pathways. May play a role in cell fate determination and tissue morphogenesis. Also acts as a receptor for several other ligands, including the pathogenic prion protein, viruses, and bacteria. Acts as a PPP1R16B-dependent substrate of PPP1CA. The polypeptide is Small ribosomal subunit protein uS2 (Oryctolagus cuniculus (Rabbit)).